Reading from the N-terminus, the 249-residue chain is 5'-nucleotidase SurE (249 aa).

D8, D9, S39, and N91 together coordinate a divalent metal cation.

Belongs to the SurE nucleotidase family. A divalent metal cation serves as cofactor.

The protein localises to the cytoplasm. The catalysed reaction is a ribonucleoside 5'-phosphate + H2O = a ribonucleoside + phosphate. Functionally, nucleotidase that shows phosphatase activity on nucleoside 5'-monophosphates. The polypeptide is 5'-nucleotidase SurE (Pseudomonas aeruginosa (strain UCBPP-PA14)).